The primary structure comprises 917 residues: Glutamate receptor (917 aa).

The first 19 residues, 1–19 (MDTCVFPLVVLWISMRITS), serve as a signal peptide directing secretion. Topologically, residues 20-556 (TLDEVPIGGI…HFFSFMEPLS (537 aa)) are extracellular. Residues asparagine 62, asparagine 95, asparagine 121, asparagine 125, asparagine 229, asparagine 251, asparagine 261, asparagine 272, asparagine 418, asparagine 419, asparagine 424, and asparagine 491 are each glycosylated (N-linked (GlcNAc...) asparagine). A helical transmembrane segment spans residues 557–577 (SEIWMCIVFAYIGVSVVLFLV). Residues 578-631 (SRFSPNEWHLSEAHHSYIANDFSISNSLWFSLGAFMQQGCDISPRSMSGRIVGS) lie on the Cytoplasmic side of the membrane. The helical transmembrane segment at 632–652 (VWWFFTLIIISSYTANLAAFL) threads the bilayer. Topologically, residues 653 to 818 (TVERMLTPID…GAQSALTLAN (166 aa)) are extracellular. Asparagine 775 carries an N-linked (GlcNAc...) asparagine glycan. The helical transmembrane segment at 819 to 839 (VAGIFYILIGGLVVAVLSAAF) threads the bilayer. The Cytoplasmic portion of the chain corresponds to 840 to 917 (EFLYKSRMDS…FEDSNTHTEV (78 aa)). The disordered stretch occupies residues 871–896 (HIDSEQKTTGNGTRRRSHNSVTYTYT).

The protein belongs to the glutamate-gated ion channel (TC 1.A.10.1) family.

It localises to the cell membrane. It is found in the postsynaptic cell membrane. Receptor for glutamate. L-glutamate acts as an excitatory neurotransmitter at many synapses in the central nervous system. The postsynaptic actions of Glu are mediated by a variety of receptors. This Lymnaea stagnalis (Great pond snail) protein is Glutamate receptor.